Here is a 299-residue protein sequence, read N- to C-terminus: Ethylmalonyl-CoA decarboxylase (299 aa).

The protein belongs to the enoyl-CoA hydratase/isomerase family.

The protein localises to the cytoplasm. It localises to the cytosol. It catalyses the reaction (2S)-ethylmalonyl-CoA + H(+) = butanoyl-CoA + CO2. It carries out the reaction (S)-methylmalonyl-CoA + H(+) = propanoyl-CoA + CO2. The enzyme catalyses (2R)-ethylmalonyl-CoA + H(+) = butanoyl-CoA + CO2. Decarboxylates ethylmalonyl-CoA, a potentially toxic metabolite, to form butyryl-CoA, suggesting it might be involved in metabolite proofreading. Acts preferentially on (S)-ethylmalonyl-CoA but also has some activity on the (R)-isomer. Also has methylmalonyl-CoA decarboxylase activity at lower level. The protein is Ethylmalonyl-CoA decarboxylase (echdc1) of Xenopus tropicalis (Western clawed frog).